A 102-amino-acid chain; its full sequence is Probable non-specific lipid-transfer protein (102 aa).

A signal peptide spans 1 to 35 (MAMAMGMAMRKEAAVAVMMVMVVTLAAGADAGAGA). 4 disulfides stabilise this stretch: Cys-37-Cys-71, Cys-45-Cys-59, Cys-60-Cys-95, and Cys-69-Cys-102.

This sequence belongs to the plant LTP family. B11E subfamily. As to expression, aleurone.

Functionally, potential phospholipid transfer protein. The polypeptide is Probable non-specific lipid-transfer protein (LTP2) (Hordeum vulgare (Barley)).